The following is a 336-amino-acid chain: Adenylate isopentenyltransferase 3, chloroplastic (336 aa).

Residues 1–55 (MIMKISMAMCKQPLPPSPTLDFPPARFGPNMLTLNPYGPKDKVVVIMGATGTGKS) constitute a chloroplast transit peptide. An ATP-binding site is contributed by 48 to 55 (GATGTGKS). C333 carries the post-translational modification Cysteine methyl ester. Residue C333 is the site of S-farnesyl cysteine attachment. Residues 334-336 (LVA) constitute a propeptide, removed in mature form.

It belongs to the IPP transferase family. Farnesylated. In terms of tissue distribution, expressed the phloem companion cells.

The protein resides in the plastid. It localises to the chloroplast. Its subcellular location is the nucleus membrane. It is found in the cytoplasm. It carries out the reaction dimethylallyl diphosphate + ADP = N(6)-(dimethylallyl)adenosine 5'-diphosphate + diphosphate. The catalysed reaction is dimethylallyl diphosphate + ATP = N(6)-(dimethylallyl)adenosine 5'-triphosphate + diphosphate. In terms of biological role, involved in cytokinin biosynthesis. Catalyzes the transfer of an isopentenyl group from dimethylallyl diphosphate (DMAPP) to ATP and ADP. The polypeptide is Adenylate isopentenyltransferase 3, chloroplastic (IPT3) (Arabidopsis thaliana (Mouse-ear cress)).